Here is a 771-residue protein sequence, read N- to C-terminus: Probable exo-1,4-beta-xylosidase xlnD (771 aa).

A signal peptide spans 1–25; that stretch reads MARIMSWHYGKAITLFVCLGPVALS. N-linked (GlcNAc...) asparagine glycosylation occurs at Asn67. Residue Asp293 is part of the active site. Asn305, Asn345, Asn423, and Asn464 each carry an N-linked (GlcNAc...) asparagine glycan.

The protein belongs to the glycosyl hydrolase 3 family.

It localises to the secreted. It carries out the reaction Hydrolysis of (1-&gt;4)-beta-D-xylans, to remove successive D-xylose residues from the non-reducing termini.. It participates in glycan degradation; xylan degradation. In terms of biological role, xylan 1,4-beta-xylosidase involved in the hydrolysis of xylan, a major structural heterogeneous polysaccharide found in plant biomass representing the second most abundant polysaccharide in the biosphere, after cellulose. This Neosartorya fischeri (strain ATCC 1020 / DSM 3700 / CBS 544.65 / FGSC A1164 / JCM 1740 / NRRL 181 / WB 181) (Aspergillus fischerianus) protein is Probable exo-1,4-beta-xylosidase xlnD (xlnD).